A 124-amino-acid polypeptide reads, in one-letter code: Large ribosomal subunit protein bL17 (124 aa).

The protein belongs to the bacterial ribosomal protein bL17 family. As to quaternary structure, part of the 50S ribosomal subunit. Contacts protein L32.

The chain is Large ribosomal subunit protein bL17 from Borrelia turicatae (strain 91E135).